A 277-amino-acid chain; its full sequence is Putative protease slr0021 (277 aa).

S85 serves as the catalytic Nucleophile. The Proton donor/acceptor role is filled by K137.

Belongs to the peptidase S49 family.

In Synechocystis sp. (strain ATCC 27184 / PCC 6803 / Kazusa), this protein is Putative protease slr0021.